Consider the following 777-residue polypeptide: Ethylene receptor 4 (777 aa).

3 helical membrane passes run 49–69, 77–97, and 113–133; these read LLIA…ATCA, AVLH…LAAF, and AAKV…LTFI. 2 residues coordinate Cu cation: cysteine 88 and histidine 92. The GAF domain occupies 184 to 344; that stretch reads DAHAILRTTA…VVADQAAVAL (161 aa). The region spanning 387-521 is the Histidine kinase domain; that stretch reads AMCHAMRRPV…NTESGACRLS (135 aa). Phosphohistidine; by autocatalysis is present on histidine 390. The region spanning 645 to 774 is the Response regulatory domain; sequence RVLLADDDAM…ALGAQLCRVL (130 aa). Aspartate 696 is subject to 4-aspartylphosphate.

The protein belongs to the ethylene receptor family. Requires Cu cation as cofactor.

Its subcellular location is the endoplasmic reticulum membrane. It catalyses the reaction ATP + protein L-histidine = ADP + protein N-phospho-L-histidine.. Its function is as follows. Ethylene receptor related to bacterial two-component regulators. Acts as a redundant negative regulator of ethylene signaling. This chain is Ethylene receptor 4, found in Oryza sativa subsp. indica (Rice).